The sequence spans 247 residues: MAAVTAALVKELRERTGLGMMECKKALVEAEGDIERAIDDLRKSGQAKAAKKAGRTAAEGAIAVAVSGDGKTAIMVEINSETDFVARDDNFLGFANKVAEAALAAAKTEAADIAGVELADGSTVEQAREALIQKIGENIQVRRAAILSAESALGAYVHGGKIGVLVALKGGDEALGRDVAMHVAAVAPQVVNPSEVPESDLEREKEIIRAQPDMAGKPAEIVEKMLGGRIQKFLKEISLVEQPFVKD.

The interval 82-85 is involved in Mg(2+) ion dislocation from EF-Tu; sequence TDFV.

Belongs to the EF-Ts family.

It localises to the cytoplasm. In terms of biological role, associates with the EF-Tu.GDP complex and induces the exchange of GDP to GTP. It remains bound to the aminoacyl-tRNA.EF-Tu.GTP complex up to the GTP hydrolysis stage on the ribosome. The sequence is that of Elongation factor Ts (tsf) from Arthrospira platensis (Spirulina platensis).